Here is a 251-residue protein sequence, read N- to C-terminus: Putative deaminase AgaI (251 aa).

The active-site Proton acceptor; for enolization step is the Asp-86. Asn-154 functions as the For ring-opening step in the catalytic mechanism. His-156 serves as the catalytic Proton acceptor; for ring-opening step. Catalysis depends on Glu-161, which acts as the For ring-opening step.

It belongs to the glucosamine/galactosamine-6-phosphate isomerase family.

The chain is Putative deaminase AgaI (agaI) from Escherichia coli (strain K12).